A 185-amino-acid chain; its full sequence is Ribosome-recycling factor (185 aa).

The protein belongs to the RRF family.

It is found in the cytoplasm. Responsible for the release of ribosomes from messenger RNA at the termination of protein biosynthesis. May increase the efficiency of translation by recycling ribosomes from one round of translation to another. This Wolbachia sp. subsp. Drosophila simulans (strain wRi) protein is Ribosome-recycling factor.